Here is a 728-residue protein sequence, read N- to C-terminus: Dynamin-like protein 1 (728 aa).

The interval 1-119 is assembly domain, required for tetramerization; sequence MKELFQKIWQ…ILQEKVQSID (119 aa). The 284-residue stretch at 159-442 folds into the Dynamin-type G domain; the sequence is QNLEFNIAIT…LYAGEKSKIA (284 aa). Residues 169 to 176 form a G1 motif region; that stretch reads GVMNAGKS. Position 171–177 (171–177) interacts with GDP; the sequence is MNAGKSS. The interval 195–196 is G2 motif; the sequence is ET. Positions 298-301 are G3 motif; that stretch reads DTPG. The G4 motif stretch occupies residues 358 to 361; it reads TKAD. Residue lysine 359 participates in GDP binding. Glutamate 388 is a region of interest (G5 motif). 400 to 402 contributes to the GDP binding site; that stretch reads SAK. The segment at 470–695 is required for liposome binding but not for tetramerization; sequence ENKQGVSEEN…LESLEKVLQS (226 aa).

Belongs to the TRAFAC class dynamin-like GTPase superfamily. Dynamin/Fzo/YdjA family. In terms of assembly, forms a 2:2 heterotetramer with DLP1. DLP2 forms a central back-to-back dimer flanked on each side by a DLP1 subunit. In the crystal structures the 2 DLP1 subunits are in very different conformations.

Its subcellular location is the cytoplasm. The protein resides in the cytosol. The catalysed reaction is GTP + H2O = GDP + phosphate + H(+). Functionally, the heterotetrameric DLP1(2)-DLP2(2) complex tethers liposomes and may mediate their fusion. Initial binding is probably mediated by DLP1, while DLP2 couples DLP1 subunits and increases the effective reach of the complex up to 45 nm. The role of the nucleotide is unknown. This subunit alone weakly binds to liposomes; GTP, GDP, GMPPCP and GMPPNP do not change heterotetramer binding. Tetramerization is required for GTPase activity, suggesting the GTPase domains (dynamin-type G) from DLP1 and DLP2 must dimerize to reconstitute the GTPase active site. In Campylobacter jejuni subsp. jejuni serotype O:23/36 (strain 81-176), this protein is Dynamin-like protein 1.